Consider the following 328-residue polypeptide: 4-hydroxy-3-methylbut-2-enyl diphosphate reductase (328 aa).

Cys24 is a [4Fe-4S] cluster binding site. (2E)-4-hydroxy-3-methylbut-2-enyl diphosphate is bound by residues His55 and His88. Positions 55 and 88 each coordinate dimethylallyl diphosphate. Positions 55 and 88 each coordinate isopentenyl diphosphate. Cys110 serves as a coordination point for [4Fe-4S] cluster. Residue His138 participates in (2E)-4-hydroxy-3-methylbut-2-enyl diphosphate binding. A dimethylallyl diphosphate-binding site is contributed by His138. Isopentenyl diphosphate is bound at residue His138. Glu140 (proton donor) is an active-site residue. Thr178 lines the (2E)-4-hydroxy-3-methylbut-2-enyl diphosphate pocket. Cys208 contributes to the [4Fe-4S] cluster binding site. (2E)-4-hydroxy-3-methylbut-2-enyl diphosphate-binding residues include Ser236, Ser237, Asn238, and Ser279. Ser236, Ser237, Asn238, and Ser279 together coordinate dimethylallyl diphosphate. The isopentenyl diphosphate site is built by Ser236, Ser237, Asn238, and Ser279.

This sequence belongs to the IspH family. The cofactor is [4Fe-4S] cluster.

The enzyme catalyses isopentenyl diphosphate + 2 oxidized [2Fe-2S]-[ferredoxin] + H2O = (2E)-4-hydroxy-3-methylbut-2-enyl diphosphate + 2 reduced [2Fe-2S]-[ferredoxin] + 2 H(+). The catalysed reaction is dimethylallyl diphosphate + 2 oxidized [2Fe-2S]-[ferredoxin] + H2O = (2E)-4-hydroxy-3-methylbut-2-enyl diphosphate + 2 reduced [2Fe-2S]-[ferredoxin] + 2 H(+). It participates in isoprenoid biosynthesis; dimethylallyl diphosphate biosynthesis; dimethylallyl diphosphate from (2E)-4-hydroxy-3-methylbutenyl diphosphate: step 1/1. Its pathway is isoprenoid biosynthesis; isopentenyl diphosphate biosynthesis via DXP pathway; isopentenyl diphosphate from 1-deoxy-D-xylulose 5-phosphate: step 6/6. Its function is as follows. Catalyzes the conversion of 1-hydroxy-2-methyl-2-(E)-butenyl 4-diphosphate (HMBPP) into a mixture of isopentenyl diphosphate (IPP) and dimethylallyl diphosphate (DMAPP). Acts in the terminal step of the DOXP/MEP pathway for isoprenoid precursor biosynthesis. The protein is 4-hydroxy-3-methylbut-2-enyl diphosphate reductase of Ehrlichia ruminantium (strain Welgevonden).